Here is a 543-residue protein sequence, read N- to C-terminus: Protein lin-14 (543 aa).

Disordered stretches follow at residues 165–228 (PNGH…SSNH) and 268–291 (APATNGTTNGATKAAGPERKPRKP). Over residues 177–213 (SMQTDEQQVKWSSPSSVDSNGQKTDSSAASAGDNQNI) the composition is skewed to polar residues. Low complexity predominate over residues 268–282 (APATNGTTNGATKAA).

Cleaved by caspase ced-3 in vitro.

It localises to the nucleus. Functionally, heterochronic protein which controls the choice of stage specific cell fates. Involved in the temporal progression of vulval fate patterning, possibly by inhibiting lin-12. Acts as a transcription factor involved in the stage-specific repression of insulin/insulin-like growth factor gene ins-33. This Caenorhabditis briggsae protein is Protein lin-14 (lin-14).